The sequence spans 663 residues: Polyunsaturated fatty acid lipoxygenase ALOX15 (663 aa).

The region spanning 2–115 (GVYRIRVSTG…ILSLPEGTGC (114 aa)) is the PLAT domain. Residues 116–663 (TVVEDSQGLF…PSMVENSVAI (548 aa)) enclose the Lipoxygenase domain. Serine 149 bears the Phosphoserine mark. Residues histidine 361, histidine 366, histidine 541, histidine 545, and isoleucine 663 each coordinate Fe cation.

It belongs to the lipoxygenase family. In terms of assembly, interacts with PEBP1; in response to IL13/interleukin-13, prevents the interaction of PEBP1 with RAF1 to activate the ERK signaling cascade. Requires Fe cation as cofactor. In terms of tissue distribution, detected in leukocytes, lung and aorta.

The protein resides in the cytoplasm. It localises to the cytosol. It is found in the cell membrane. Its subcellular location is the lipid droplet. The catalysed reaction is (5Z,8Z,11Z,14Z)-eicosatetraenoate + O2 = (12S)-hydroperoxy-(5Z,8Z,10E,14Z)-eicosatetraenoate. It catalyses the reaction (5Z,8Z,11Z,14Z)-eicosatetraenoate + O2 = (15S)-hydroperoxy-(5Z,8Z,11Z,13E)-eicosatetraenoate. It carries out the reaction (9Z,12Z)-octadecadienoate + O2 = (13S)-hydroperoxy-(9Z,11E)-octadecadienoate. The enzyme catalyses (12S)-hydroperoxy-(5Z,8Z,10E,14Z)-eicosatetraenoate = (8S)-hydroxy-(11S,12S)-epoxy-(5Z,9E,14Z)-eicosatrienoate. The catalysed reaction is (5Z,8Z,11Z,14Z)-eicosatetraenoate + 2 O2 = (14R,15S)-dihydroperoxy-(5Z,8Z,10E,12E)-eicosatetraenoate. It catalyses the reaction (5Z,8Z,11Z,14Z)-eicosatetraenoate + 2 O2 = (8S,15S)-dihydroperoxy-(5Z,9E,11Z,13E)-eicosatetraenoate. It carries out the reaction (14S,15R)-epoxy-(5Z,8Z,11Z)-eicosatrienoate + O2 = (8S)-hydroperoxy-(14S,15R)-epoxy-(5Z,9E,11Z)-eicosatrienoate. The enzyme catalyses (14S,15R)-epoxy-(5Z,8Z,11Z)-eicosatrienoate + O2 = (12S)-hydroperoxy-(14S,15R)-epoxy-(5Z,8Z,10E)-eicosatrienoate. The catalysed reaction is (14R,15S)-epoxy-(5Z,8Z,11Z)-eicosatrienoate + O2 = (5S)-hydroperoxy-(14R,15S)-epoxy-(6E,8Z,11Z)-eicosatrienoate. It catalyses the reaction (14R,15S)-epoxy-(5Z,8Z,11Z)-eicosatrienoate + O2 = (12S)-hydroperoxy-(14R,15S)-epoxy-(5Z,8Z,10E)-eicosatrienoate. It carries out the reaction (15R)-hydroperoxy-(5Z,8Z,11Z,13E)-eicosatetraenoate = 15-oxo-(5Z,8Z,11Z,13E)-eicosatetraenoate + H2O. The enzyme catalyses (15S)-hydroperoxy-(5Z,8Z,11Z,13E)-eicosatetraenoate = (14S,15S)-epoxy-(5Z,8Z,10E,12E)-eicosatetraenoate + H2O. The catalysed reaction is (4Z,7Z,10Z,13Z,16Z)-docosapentaenoate + O2 = 14-hydroperoxy-(4Z,7Z,10Z,12E,16Z)-docosapentaenoate. It catalyses the reaction (7Z,10Z,13Z,16Z,19Z)-docosapentaenoate + O2 = 14-hydroperoxy-(7Z,10Z,12E,16Z,19Z)-docosapentaenoate. It carries out the reaction (4Z,7Z,10Z,13Z,16Z,19Z)-docosahexaenoate + O2 = (14S)-hydroperoxy-(4Z,7Z,10Z,12E,16Z,19Z)-docosahexaenoate. The enzyme catalyses (4Z,7Z,10Z,13Z,16Z,19Z)-docosahexaenoate + O2 = (17S)-hydroperoxy-(4Z,7Z,10Z,13Z,15E,19Z)-docosahexaenoate. The catalysed reaction is (7S)-hydroperoxy-(4Z,8E,10Z,13Z,16Z,19Z)-docosahexaenoate + O2 = (7S,14S)-dihydroperoxy-(4Z,8E,10Z,12E,16Z,19Z)-docosahexaenoate. It catalyses the reaction (7S)-hydroperoxy-(4Z,8E,10Z,13Z,16Z,19Z)-docosahexaenoate + O2 = (7S,17S)-dihydroperoxy-(4Z,8E,10Z,13Z,15E,19Z)-docosahexaenoate. It carries out the reaction (4Z,7Z,10Z,13Z,16Z,19Z)-docosahexaenoate + O2 = (11S)-hydroperoxy-(4Z,7Z,9E,13Z,16Z,19Z)-docosahexaenoate. The enzyme catalyses N-(5Z,8Z,11Z,14Z)-eicosatetraenoyl-taurine + O2 = N-(12S)-hydroperoxy-(5Z,8Z,10E,14Z)-eicosatetraenoyl-taurine. The catalysed reaction is N-(5Z,8Z,11Z,14Z)-eicosatetraenoyl-gamma-aminobutanoate + O2 = N-(12S)-hydroperoxy-(5Z,8Z,10E,14Z)-eicosatetraenoyl-gamma-aminobutanoate. It catalyses the reaction N-(5Z,8Z,11Z,14Z)-eicosatetraenoyl-glycine + O2 = N-(12S)-hydroperoxy-(5Z,8Z,10E,14Z)-eicosatetraenoyl-glycine. It carries out the reaction N-(5Z,8Z,11Z,14Z)-eicosatetraenoyl-L-alanine + O2 = N-(12S)-hydroperoxy-(5Z,8Z,10E,14Z)-eicosatetraenoyl-alanine. The enzyme catalyses N-(5Z,8Z,11Z,14Z)-eicosatetraenoyl-taurine + O2 = N-(15S)-hydroperoxy-(5Z,8Z,11Z,13E)-eicosatetraenoyl-taurine. The catalysed reaction is N-(5Z,8Z,11Z,14Z)-eicosatetraenoyl-gamma-aminobutanoate + O2 = N-(15S)-hydroperoxy-(5Z,8Z,11Z,13E)-eicosatetraenoyl-gamma-aminobutanoate. It catalyses the reaction N-(5Z,8Z,11Z,14Z)-eicosatetraenoyl-glycine + O2 = N-(15S)-hydroperoxy-(5Z,8Z,11Z,13E)-eicosatetraenoyl-glycine. It carries out the reaction N-(5Z,8Z,11Z,14Z)-eicosatetraenoyl-L-alanine + O2 = N-(15S)-hydroperoxy-(5Z,8Z,11Z,13E)-eicosatetraenoyl-alanine. Its pathway is lipid metabolism; hydroperoxy eicosatetraenoic acid biosynthesis. Non-heme iron-containing dioxygenase that catalyzes the stereo-specific peroxidation of free and esterified polyunsaturated fatty acids generating a spectrum of bioactive lipid mediators. It inserts peroxyl groups at C12 or C15 of arachidonate ((5Z,8Z,11Z,14Z)-eicosatetraenoate) producing both 12-hydroperoxyeicosatetraenoate/12-HPETE and 15-hydroperoxyeicosatetraenoate/15-HPETE. It may then act on 12-HPETE to produce hepoxilins, which may show pro-inflammatory properties. Can also peroxidize linoleate ((9Z,12Z)-octadecadienoate) to 13-hydroperoxyoctadecadienoate. May participate in the sequential oxidations of DHA ((4Z,7Z,10Z,13Z,16Z,19Z)-docosahexaenoate) to generate specialized pro-resolving mediators (SPMs)like resolvin D5 ((7S,17S)-diHPDHA) and (7S,14S)-diHPDHA, that actively down-regulate the immune response and have anti-aggregation properties with platelets. Can convert epoxy fatty acids to hydroperoxy-epoxides derivatives followed by an intramolecular nucleophilic substitution leading to the formation of monocyclic endoperoxides. Plays an important role during the maintenance of self-tolerance by peroxidizing membrane-bound phosphatidylethanolamine which can then signal the sorting process for clearance of apoptotic cells during inflammation and prevent an autoimmune response. In addition to its role in the immune and inflammatory responses, this enzyme may play a role in epithelial wound healing in the cornea through production of lipoxin A4 (LXA(4)) and docosahexaenoic acid-derived neuroprotectin D1 (NPD1; 10R,17S-HDHA), both lipid autacoids exhibit anti-inflammatory and neuroprotective properties. Furthermore, it may regulate actin polymerization which is crucial for several biological processes such as the phagocytosis of apoptotic cells. It is also implicated in the generation of endogenous ligands for peroxisome proliferator activated receptor (PPAR-gamma), hence modulating macrophage development and function. It may also exert a negative effect on skeletal development by regulating bone mass through this pathway. As well as participates in ER stress and downstream inflammation in adipocytes, pancreatic islets, and liver. Finally, it is also involved in the cellular response to IL13/interleukin-13. This is Polyunsaturated fatty acid lipoxygenase ALOX15 from Rattus norvegicus (Rat).